Consider the following 346-residue polypeptide: Dihydroorotase (346 aa).

Zn(2+) contacts are provided by His-14 and His-16. Substrate-binding positions include 16 to 18 (HLR) and Asn-42. Positions 100, 137, and 175 each coordinate Zn(2+). Lys-100 is subject to N6-carboxylysine. Residue His-137 participates in substrate binding. Substrate is bound at residue Leu-220. Residue Asp-248 coordinates Zn(2+). Asp-248 is a catalytic residue. Substrate-binding residues include His-252 and Ala-264.

The protein belongs to the metallo-dependent hydrolases superfamily. DHOase family. Class II DHOase subfamily. In terms of assembly, homodimer. Zn(2+) is required as a cofactor.

It carries out the reaction (S)-dihydroorotate + H2O = N-carbamoyl-L-aspartate + H(+). It functions in the pathway pyrimidine metabolism; UMP biosynthesis via de novo pathway; (S)-dihydroorotate from bicarbonate: step 3/3. Catalyzes the reversible cyclization of carbamoyl aspartate to dihydroorotate. This is Dihydroorotase from Ruegeria sp. (strain TM1040) (Silicibacter sp.).